The primary structure comprises 874 residues: Alanine--tRNA ligase (874 aa).

His-564, His-568, Cys-665, and His-669 together coordinate Zn(2+).

It belongs to the class-II aminoacyl-tRNA synthetase family. Requires Zn(2+) as cofactor.

The protein localises to the cytoplasm. The catalysed reaction is tRNA(Ala) + L-alanine + ATP = L-alanyl-tRNA(Ala) + AMP + diphosphate. In terms of biological role, catalyzes the attachment of alanine to tRNA(Ala) in a two-step reaction: alanine is first activated by ATP to form Ala-AMP and then transferred to the acceptor end of tRNA(Ala). Also edits incorrectly charged Ser-tRNA(Ala) and Gly-tRNA(Ala) via its editing domain. This is Alanine--tRNA ligase from Burkholderia pseudomallei (strain 668).